Reading from the N-terminus, the 268-residue chain is Hydroxyethylthiazole kinase (268 aa).

Residue methionine 44 coordinates substrate. Arginine 119 and serine 165 together coordinate ATP. Glycine 192 serves as a coordination point for substrate.

It belongs to the Thz kinase family. It depends on Mg(2+) as a cofactor.

It catalyses the reaction 5-(2-hydroxyethyl)-4-methylthiazole + ATP = 4-methyl-5-(2-phosphooxyethyl)-thiazole + ADP + H(+). The protein operates within cofactor biosynthesis; thiamine diphosphate biosynthesis; 4-methyl-5-(2-phosphoethyl)-thiazole from 5-(2-hydroxyethyl)-4-methylthiazole: step 1/1. Functionally, catalyzes the phosphorylation of the hydroxyl group of 4-methyl-5-beta-hydroxyethylthiazole (THZ). In Corynebacterium glutamicum (strain R), this protein is Hydroxyethylthiazole kinase.